The chain runs to 467 residues: Xanthan biosynthesis protein XanB (467 aa).

It belongs to the mannose-6-phosphate isomerase type 2 family.

It catalyses the reaction D-mannose 6-phosphate = D-fructose 6-phosphate. The catalysed reaction is alpha-D-mannose 1-phosphate + GTP + H(+) = GDP-alpha-D-mannose + diphosphate. It participates in nucleotide-sugar biosynthesis; GDP-alpha-D-mannose biosynthesis; GDP-alpha-D-mannose from alpha-D-mannose 1-phosphate (GTP route): step 1/1. The protein operates within nucleotide-sugar biosynthesis; GDP-alpha-D-mannose biosynthesis; alpha-D-mannose 1-phosphate from D-fructose 6-phosphate: step 1/2. In terms of biological role, involved in xanthan production. In Xanthomonas campestris pv. campestris (strain B100), this protein is Xanthan biosynthesis protein XanB (xanB).